A 70-amino-acid polypeptide reads, in one-letter code: Translation initiation factor IF-1 (70 aa).

One can recognise an S1-like domain in the interval 1-70; that stretch reads MKNDKLFLTG…LKLGRITQRK (70 aa).

It belongs to the IF-1 family. In terms of assembly, component of the 30S ribosomal translation pre-initiation complex which assembles on the 30S ribosome in the order IF-2 and IF-3, IF-1 and N-formylmethionyl-tRNA(fMet); mRNA recruitment can occur at any time during PIC assembly.

It localises to the cytoplasm. Functionally, one of the essential components for the initiation of protein synthesis. Stabilizes the binding of IF-2 and IF-3 on the 30S subunit to which N-formylmethionyl-tRNA(fMet) subsequently binds. Helps modulate mRNA selection, yielding the 30S pre-initiation complex (PIC). Upon addition of the 50S ribosomal subunit IF-1, IF-2 and IF-3 are released leaving the mature 70S translation initiation complex. The polypeptide is Translation initiation factor IF-1 (Mycoplasma genitalium (strain ATCC 33530 / DSM 19775 / NCTC 10195 / G37) (Mycoplasmoides genitalium)).